A 447-amino-acid polypeptide reads, in one-letter code: Ion-translocating oxidoreductase complex subunit C (447 aa).

4Fe-4S ferredoxin-type domains follow at residues 359 to 389 (AEVL…GRIA) and 399 to 430 (RCRE…LIRY). 8 residues coordinate [4Fe-4S] cluster: Cys-369, Cys-372, Cys-375, Cys-379, Cys-408, Cys-411, Cys-414, and Cys-418.

This sequence belongs to the 4Fe4S bacterial-type ferredoxin family. RnfC subfamily. The Rnf complex is probably composed of eight subunits, including RnfA, RnfB, RnfC, RnfD, RnfE and RnfG. [4Fe-4S] cluster is required as a cofactor.

Its subcellular location is the cell membrane. Part of a membrane-bound complex that couples electron transfer with translocation of ions across the membrane. Catalyzes Na(+) transport, most probably coupled to electron transfer from reduced ferredoxin to methanophenazine and heterodisulfide reductase. Involved in heterodisulfide reduction during methanogenesis from acetate. The protein is Ion-translocating oxidoreductase complex subunit C of Methanosarcina acetivorans (strain ATCC 35395 / DSM 2834 / JCM 12185 / C2A).